The following is a 31-amino-acid chain: Cytochrome b6-f complex subunit 6 (31 aa).

A helical transmembrane segment spans residues 4-26 (ITSYFGFLLAALTITSALLIGLN).

It belongs to the PetL family. The 4 large subunits of the cytochrome b6-f complex are cytochrome b6, subunit IV (17 kDa polypeptide, PetD), cytochrome f and the Rieske protein, while the 4 small subunits are PetG, PetL, PetM and PetN. The complex functions as a dimer.

It localises to the plastid. It is found in the chloroplast thylakoid membrane. Functionally, component of the cytochrome b6-f complex, which mediates electron transfer between photosystem II (PSII) and photosystem I (PSI), cyclic electron flow around PSI, and state transitions. PetL is important for photoautotrophic growth as well as for electron transfer efficiency and stability of the cytochrome b6-f complex. This is Cytochrome b6-f complex subunit 6 from Amborella trichopoda.